Consider the following 275-residue polypeptide: Large ribosomal subunit protein uL2 (275 aa).

Residues 222–257 (GTAMNAVDHPHGGGRGRSKGNNQPRSPWNQPAKGFK) form a disordered region. Polar residues predominate over residues 240–250 (KGNNQPRSPWN).

This sequence belongs to the universal ribosomal protein uL2 family. As to quaternary structure, part of the 50S ribosomal subunit. Forms a bridge to the 30S subunit in the 70S ribosome.

Its function is as follows. One of the primary rRNA binding proteins. Required for association of the 30S and 50S subunits to form the 70S ribosome, for tRNA binding and peptide bond formation. It has been suggested to have peptidyltransferase activity; this is somewhat controversial. Makes several contacts with the 16S rRNA in the 70S ribosome. In Endomicrobium trichonymphae, this protein is Large ribosomal subunit protein uL2.